The primary structure comprises 226 residues: UPF0502 protein azo0627 (226 aa).

This sequence belongs to the UPF0502 family.

The chain is UPF0502 protein azo0627 from Azoarcus sp. (strain BH72).